Consider the following 187-residue polypeptide: Probable chorismate pyruvate-lyase (187 aa).

Substrate contacts are provided by Arg77, Leu115, and Glu174.

This sequence belongs to the UbiC family.

Its subcellular location is the cytoplasm. The catalysed reaction is chorismate = 4-hydroxybenzoate + pyruvate. Its pathway is cofactor biosynthesis; ubiquinone biosynthesis. Removes the pyruvyl group from chorismate, with concomitant aromatization of the ring, to provide 4-hydroxybenzoate (4HB) for the ubiquinone pathway. This Shewanella sp. (strain ANA-3) protein is Probable chorismate pyruvate-lyase.